Consider the following 875-residue polypeptide: Neurotrypsin (875 aa).

An N-terminal signal peptide occupies residues 1–20 (MTLARFVLALVLGALPEVVG). Asparagine 26 is a glycosylation site (N-linked (GlcNAc...) asparagine). The interval 29-68 (LHHRHRHSPPPGPQYPYYLPTHQRPPRTRPPPPLPRFSRP) is disordered. A Kringle domain is found at 93–165 (CPPGEPWVSV…GKVDWGYCDC (73 aa)). 20 cysteine pairs are disulfide-bonded: cysteine 93/cysteine 165, cysteine 109/cysteine 149, cysteine 138/cysteine 163, cysteine 195/cysteine 259, cysteine 208/cysteine 269, cysteine 239/cysteine 249, cysteine 305/cysteine 369, cysteine 318/cysteine 379, cysteine 349/cysteine 359, cysteine 412/cysteine 475, cysteine 425/cysteine 485, cysteine 455/cysteine 465, cysteine 525/cysteine 589, cysteine 538/cysteine 599, cysteine 569/cysteine 579, cysteine 619/cysteine 750, cysteine 661/cysteine 677, cysteine 765/cysteine 831, cysteine 794/cysteine 808, and cysteine 821/cysteine 850. 4 SRCR domains span residues 170–271 (VRLR…TCSF), 280–381 (IRLV…SCTP), 387–487 (IRLA…ACYP), and 500–601 (VRLM…ICDY). The interval 619–630 (CGLRLLHRRQKR) is zymogen activation region. Residues 631 to 874 (IIGGKNSLRG…FVPWIKSVTK (244 aa)) enclose the Peptidase S1 domain. Catalysis depends on histidine 676, which acts as the Charge relay system. Residue asparagine 683 is glycosylated (N-linked (GlcNAc...) asparagine). Aspartate 726 serves as the catalytic Charge relay system. The active-site Charge relay system is the serine 825.

It belongs to the peptidase S1 family.

The protein resides in the secreted. Its function is as follows. Plays a role in neuronal plasticity and the proteolytic action may subserve structural reorganizations associated with learning and memory operations. The polypeptide is Neurotrypsin (PRSS12) (Trachypithecus phayrei (Phayre's leaf monkey)).